Reading from the N-terminus, the 432-residue chain is Tol-Pal system protein TolB (432 aa).

An N-terminal signal peptide occupies residues 1-29; it reads MMRNVWKSGLRRSAWIGLLMVLCVGVARA.

This sequence belongs to the TolB family. As to quaternary structure, the Tol-Pal system is composed of five core proteins: the inner membrane proteins TolA, TolQ and TolR, the periplasmic protein TolB and the outer membrane protein Pal. They form a network linking the inner and outer membranes and the peptidoglycan layer.

The protein resides in the periplasm. Part of the Tol-Pal system, which plays a role in outer membrane invagination during cell division and is important for maintaining outer membrane integrity. The sequence is that of Tol-Pal system protein TolB from Ralstonia nicotianae (strain ATCC BAA-1114 / GMI1000) (Ralstonia solanacearum).